The following is an 88-amino-acid chain: Alpha-latrotoxin associated low molecular weight protein 2 (88 aa).

The signal sequence occupies residues 1–19 (MLKLICIVFLVTVLTFVVG). 3 cysteine pairs are disulfide-bonded: C30/C66, C46/C62, and C49/C75.

This sequence belongs to the arthropod CHH/MIH/GIH/VIH hormone family. Expressed by the venom gland.

The protein localises to the secreted. In terms of biological role, may increase the toxicity of alpha-latrotoxin and/or other venom components. Is non-toxic to mice and to the cockroach Periplaneta americana. This Latrodectus geometricus (Brown widow spider) protein is Alpha-latrotoxin associated low molecular weight protein 2.